The sequence spans 157 residues: Cyclic pyranopterin monophosphate synthase (157 aa).

Substrate-binding positions include 74–76 (MCH) and 111–112 (ME). Residue aspartate 126 is part of the active site.

The protein belongs to the MoaC family. In terms of assembly, homohexamer; trimer of dimers.

It carries out the reaction (8S)-3',8-cyclo-7,8-dihydroguanosine 5'-triphosphate = cyclic pyranopterin phosphate + diphosphate. It functions in the pathway cofactor biosynthesis; molybdopterin biosynthesis. In terms of biological role, catalyzes the conversion of (8S)-3',8-cyclo-7,8-dihydroguanosine 5'-triphosphate to cyclic pyranopterin monophosphate (cPMP). This chain is Cyclic pyranopterin monophosphate synthase, found in Carboxydothermus hydrogenoformans (strain ATCC BAA-161 / DSM 6008 / Z-2901).